The following is a 578-amino-acid chain: MKASRFFIGTLKEAPADAEIVSHKLMVRAGMIRRVAGGIYNYLPVGLRSIRKVEAIVREEMNRAGAIELLMPAVQPAELWQESGRWEQYGPELLRFKDRKQNEFVIGPTHEEVVTDIARNQIKSYRQMPVNFYQIQTKFRDEIRPRFGVMRGREFIMKDAYSFDKDHESLKESYKKMYDAYVRIFTRIGLEFRPVAADNGSIGGSGSHEFHVIADTGEDAIAYCPTSDFAANVEAAEALPLLASRAAPAEAMQKVATPGKAKCEAVAELMGIPLERTIKSIVLATDNEGAEPTVWLLMLRGDHDLNEIKTAKLPGLAGYRFATEAEIVEWFGTPPGYLGPIGTKKPVRVVADRTVANMSDFVVGANEVDYHIAGVNWGRDLPEPVIADIRNVKAGDPSPDGKGVLDICRGIEVGHVFQLGTKYSDAMGATFIDESGKAQPMVMGCYGIGVTRILGAAIEQNFDDKGIIWPEAIAPFEVVLCPMGYDRSDAVREAADKLYADLAAAGIDVILDDRGERPGVMFADWELIGVPHRLVIGERGLKDGKIEYQGRRDAEATLLPADSAATAVAEKVRAALAR.

It belongs to the class-II aminoacyl-tRNA synthetase family. ProS type 1 subfamily. As to quaternary structure, homodimer.

It localises to the cytoplasm. It catalyses the reaction tRNA(Pro) + L-proline + ATP = L-prolyl-tRNA(Pro) + AMP + diphosphate. Functionally, catalyzes the attachment of proline to tRNA(Pro) in a two-step reaction: proline is first activated by ATP to form Pro-AMP and then transferred to the acceptor end of tRNA(Pro). As ProRS can inadvertently accommodate and process non-cognate amino acids such as alanine and cysteine, to avoid such errors it has two additional distinct editing activities against alanine. One activity is designated as 'pretransfer' editing and involves the tRNA(Pro)-independent hydrolysis of activated Ala-AMP. The other activity is designated 'posttransfer' editing and involves deacylation of mischarged Ala-tRNA(Pro). The misacylated Cys-tRNA(Pro) is not edited by ProRS. The protein is Proline--tRNA ligase of Burkholderia thailandensis (strain ATCC 700388 / DSM 13276 / CCUG 48851 / CIP 106301 / E264).